A 421-amino-acid chain; its full sequence is ATP-dependent RNA helicase RhlB (421 aa).

The Q motif motif lies at 9 to 37 (QKFSDFALHPKVVEALEKKGFHNCTPIQA). The 180-residue stretch at 40 to 219 (LPLTLAGRDV…FEQMNNAEYI (180 aa)) folds into the Helicase ATP-binding domain. 53–60 (AQTGTGKT) serves as a coordination point for ATP. Residues 165 to 168 (DEAD) carry the DEAD box motif. In terms of domain architecture, Helicase C-terminal spans 245–390 (RLLQTLIEEE…VSKYNPDALM (146 aa)). The tract at residues 392 to 421 (DLPKPLRLTRPRTGNGPRRTGAPRNRRRSG) is disordered. Positions 402-414 (PRTGNGPRRTGAP) are enriched in low complexity.

This sequence belongs to the DEAD box helicase family. RhlB subfamily. Component of the RNA degradosome, which is a multiprotein complex involved in RNA processing and mRNA degradation.

It is found in the cytoplasm. It catalyses the reaction ATP + H2O = ADP + phosphate + H(+). In terms of biological role, DEAD-box RNA helicase involved in RNA degradation. Has RNA-dependent ATPase activity and unwinds double-stranded RNA. The sequence is that of ATP-dependent RNA helicase RhlB from Escherichia coli (strain SMS-3-5 / SECEC).